The following is a 481-amino-acid chain: Glutamate--tRNA ligase (481 aa).

The 'HIGH' region signature appears at Pro-11–Asn-21. Residues Lys-255 to Arg-259 carry the 'KMSKS' region motif. Lys-258 serves as a coordination point for ATP.

Belongs to the class-I aminoacyl-tRNA synthetase family. Glutamate--tRNA ligase type 1 subfamily. Monomer.

Its subcellular location is the cytoplasm. It carries out the reaction tRNA(Glu) + L-glutamate + ATP = L-glutamyl-tRNA(Glu) + AMP + diphosphate. Its function is as follows. Catalyzes the attachment of glutamate to tRNA(Glu) in a two-step reaction: glutamate is first activated by ATP to form Glu-AMP and then transferred to the acceptor end of tRNA(Glu). The polypeptide is Glutamate--tRNA ligase (Streptococcus pyogenes serotype M4 (strain MGAS10750)).